The chain runs to 182 residues: Peptide deformylase (182 aa).

Fe cation-binding residues include Cys-100 and His-142. Residue Glu-143 is part of the active site. Fe cation is bound at residue His-146.

Belongs to the polypeptide deformylase family. Fe(2+) serves as cofactor.

It catalyses the reaction N-terminal N-formyl-L-methionyl-[peptide] + H2O = N-terminal L-methionyl-[peptide] + formate. In terms of biological role, removes the formyl group from the N-terminal Met of newly synthesized proteins. Requires at least a dipeptide for an efficient rate of reaction. N-terminal L-methionine is a prerequisite for activity but the enzyme has broad specificity at other positions. In Bartonella bacilliformis (strain ATCC 35685 / KC583 / Herrer 020/F12,63), this protein is Peptide deformylase.